The primary structure comprises 340 residues: Probable cyclic nucleotide phosphodiesterase PsycPRwf_0181 (340 aa).

Residues 1–36 (MAPLPHSVSPRHTQVADNGRLSEPTDYHPPTEISTD) form a disordered region. The Fe cation site is built by D47, H49, D128, N158, H237, H276, and H278. AMP-binding positions include H49, D128, and 158 to 159 (NH). H278 provides a ligand contact to AMP.

The protein belongs to the cyclic nucleotide phosphodiesterase class-III family. Fe(2+) serves as cofactor.

The protein is Probable cyclic nucleotide phosphodiesterase PsycPRwf_0181 of Psychrobacter sp. (strain PRwf-1).